The following is a 626-amino-acid chain: Chaperone protein HtpG (626 aa).

The a; substrate-binding stretch occupies residues 1–341 (MRKKKFKAES…SEDLSLNISR (341 aa)). Positions 342–552 (EMLQHDRQLK…DGEVTIEMEK (211 aa)) are b. The c stretch occupies residues 553 to 626 (VLNAMPDSQQ…FTNDICKVMV (74 aa)).

It belongs to the heat shock protein 90 family. In terms of assembly, homodimer.

The protein resides in the cytoplasm. Molecular chaperone. Has ATPase activity. This is Chaperone protein HtpG from Bacillus velezensis (strain DSM 23117 / BGSC 10A6 / LMG 26770 / FZB42) (Bacillus amyloliquefaciens subsp. plantarum).